The sequence spans 56 residues: Small ribosomal subunit protein uS14 (56 aa).

Zn(2+)-binding residues include Cys-21, Cys-24, Cys-39, and Cys-42.

The protein belongs to the universal ribosomal protein uS14 family. Zn(2+) serves as cofactor.

This Candida glabrata (strain ATCC 2001 / BCRC 20586 / JCM 3761 / NBRC 0622 / NRRL Y-65 / CBS 138) (Yeast) protein is Small ribosomal subunit protein uS14 (RPS29).